The following is a 619-amino-acid chain: ATP-dependent RNA helicase DBP8 (619 aa).

A disordered region spans residues 1–149 (MAVSKKSRKS…NGLPSASKPS (149 aa)). The segment covering 46 to 67 (EGNDESDEEDDDVSNEGEDEGE) has biased composition (acidic residues). Low complexity predominate over residues 68 to 78 (SSGSEAESSVA). Positions 93-105 (LDAEGEEDKENEE) are enriched in acidic residues. A compositionally biased stretch (polar residues) spans 137–147 (PQPNGLPSASK). A Q motif motif is present at residues 152-180 (VTFESLGLSRPLITALASINIKKPTEIQA). The Helicase ATP-binding domain maps to 183–356 (VEPILSGRDC…NKEPPAGKQR (174 aa)). 196-203 (AKTGSGKT) is a binding site for ATP. Residues 304–307 (DEAD) carry the DEAD box motif. Positions 414 to 436 (EREAALGKKGKKPKQAKEEEDAP) are disordered. One can recognise a Helicase C-terminal domain in the interval 430 to 572 (KEEEDAPSVP…ELKLDEDKVL (143 aa)).

The protein belongs to the DEAD box helicase family. DDX49/DBP8 subfamily.

Its subcellular location is the nucleus. The protein resides in the nucleolus. It carries out the reaction ATP + H2O = ADP + phosphate + H(+). In terms of biological role, ATP-binding RNA helicase involved in 40S ribosomal subunit biogenesis and is required for the normal formation of 18S rRNAs through pre-rRNA processing at A0, A1 and A2 sites. Required for vegetative growth. This Cryptococcus neoformans var. neoformans serotype D (strain B-3501A) (Filobasidiella neoformans) protein is ATP-dependent RNA helicase DBP8 (DBP8).